The primary structure comprises 129 residues: Capsid protein (129 aa).

The segment at 31-104 (EWISSNSRSQ…FATNSDCELI (74 aa)) is viral RNA-binding.

Belongs to the Leviviricetes capsid protein family. In terms of assembly, homodimer. The capsid proteins form dimers that assemble by group of 5. Twelve such pentamers are linked together with free dimers. The homodimers binds to the viral RNA via an operator hairpin, but also to many other RNA sequences in the viral genome; this interaction probably shifts the virus from the replicative to the assembly phase and ensures specific encapsidation of the viral genome.

It localises to the virion. Capsid protein self-assembles to form an icosahedral capsid with a T=3 symmetry, about 26 nm in diameter, and consisting of 89 capsid proteins dimers (178 capsid proteins). Involved in viral genome encapsidation through the interaction between a capsid protein dimer and the multiple packaging signals present in the RNA genome. The capsid also contains 1 copy of the A2 maturation protein. Its function is as follows. Acts as a translational repressor of viral replicase synthesis late in infection. This latter function is the result of capsid protein interaction with an RNA hairpin which contains the replicase ribosome-binding site. This chain is Capsid protein, found in Enterobacteria phage f2 (Bacteriophage f2).